The sequence spans 576 residues: SNF1-like protein kinase ssp2 (576 aa).

One can recognise a Protein kinase domain in the interval 34–285; it reads YIIRETLGEG…IQEIRRDPWF (252 aa). ATP-binding positions include 40–48 and Lys63; that span reads LGEGSFGKV. The active-site Proton acceptor is the Asp156. Thr189 carries the phosphothreonine modification. The tract at residues 292-348 is auto-inhibitory domain (AID); the sequence is YLRPMEEVQGSYADSRIVSKLGEAMGFSEDYIVEALRSDENNEVKEAYNLLHENQVI. The UBA domain maps to 304–345; that stretch reads ADSRIVSKLGEAMGFSEDYIVEALRSDENNEVKEAYNLLHEN. Phosphoserine is present on Ser442.

This sequence belongs to the protein kinase superfamily. CAMK Ser/Thr protein kinase family. SNF1 subfamily. In terms of assembly, component of the AMP-activated protein kinase complex also known as the SNF1 kinase complex (Snf1c), a heterotrimeric complex composed of a catalytic subunit alpha and 2 regulatory subunits beta (amk2) and gamma (cbs2). Post-translationally, phosphorylation at Thr-189 by ssp1 is required for nuclear entry in nutritionally stressed cells.

Its subcellular location is the cytoplasm. The protein resides in the nucleus. It carries out the reaction L-seryl-[protein] + ATP = O-phospho-L-seryl-[protein] + ADP + H(+). The catalysed reaction is L-threonyl-[protein] + ATP = O-phospho-L-threonyl-[protein] + ADP + H(+). Serine/threonine protein kinase essential for release from glucose repression via the phosphorylation of scr1 upon glucose deprivation. Catalytic subunit of the AMP-activated protein kinase complex also known as the SNF1 kinase complex (Snf1c), a central regulator of cellular energy homeostasis, which, in response to a fall in intracellular ATP levels, activates energy-producing pathways and inhibits energy-consuming processes. The complex phosphorylates histone H3 to form H3S10ph, which promotes H3K14ac formation, leading to transcriptional activation through TBP recruitment to the promoters. Regulates proper cell cycle exit and sexual differentiation. Also regulates ste11 levels under nitrogen deprivation. In Schizosaccharomyces pombe (strain 972 / ATCC 24843) (Fission yeast), this protein is SNF1-like protein kinase ssp2.